Here is a 291-residue protein sequence, read N- to C-terminus: UTP--glucose-1-phosphate uridylyltransferase (291 aa).

It belongs to the UDPGP type 2 family.

The catalysed reaction is alpha-D-glucose 1-phosphate + UTP + H(+) = UDP-alpha-D-glucose + diphosphate. In terms of biological role, may play a role in stationary phase survival. This is UTP--glucose-1-phosphate uridylyltransferase (galU) from Mycoplasma pneumoniae (strain ATCC 29342 / M129 / Subtype 1) (Mycoplasmoides pneumoniae).